We begin with the raw amino-acid sequence, 362 residues long: Probable non-structural 41.0 kDa protein (362 aa).

Positions 341-362 (MNAAAPSAPTPTELPVFSPPSS) are disordered.

This chain is Probable non-structural 41.0 kDa protein (S6), found in Maize rough dwarf virus (MRDV).